A 429-amino-acid chain; its full sequence is Histidine--tRNA ligase (429 aa).

Belongs to the class-II aminoacyl-tRNA synthetase family. Homodimer.

The protein resides in the cytoplasm. It catalyses the reaction tRNA(His) + L-histidine + ATP = L-histidyl-tRNA(His) + AMP + diphosphate + H(+). The polypeptide is Histidine--tRNA ligase (Cyanothece sp. (strain PCC 7425 / ATCC 29141)).